Consider the following 455-residue polypeptide: Golgi pH regulator (455 aa).

Helical transmembrane passes span 5 to 25, 46 to 66, 79 to 99, 114 to 134, and 150 to 170; these read IDSSIMITSQILFFGFGWLFF, VTFAFSCTMFELIIFEILGVL, LCVILLILVFMVPFYIGYFIV, CLLWLTFMYFFWKLGDPFPIL, and VGVIGVTLMALLSGFGAVNCP. N-linked (GlcNAc...) asparagine glycosylation is found at Asn180 and Asn243. Helical transmembrane passes span 290–310, 343–363, 378–398, and 425–445; these read GYFFSIYCVWKIFMATINIVF, ISFILVGIIIVTSIRGLLITL, VIVLLLAQIMGMYFVSSVLLI, and WFDVIFLVSALSSILFLYLAH.

This sequence belongs to the Golgi pH regulator (TC 1.A.38) family. As to quaternary structure, homotrimer. Interacts with RABL3; the interaction stabilizes GPR89A.

The protein resides in the golgi apparatus membrane. It carries out the reaction iodide(out) = iodide(in). The enzyme catalyses chloride(in) = chloride(out). It catalyses the reaction bromide(in) = bromide(out). The catalysed reaction is fluoride(in) = fluoride(out). Its function is as follows. Voltage-gated channel that enables the transfer of monoatomic anions such as iodide, chloride, bromide and fluoride which may function in counter-ion conductance and participates in Golgi acidification. Plays a role in lymphocyte development, probably by acting as a RABL3 effector in hematopoietic cells. The polypeptide is Golgi pH regulator (Bos taurus (Bovine)).